Consider the following 240-residue polypeptide: Izumo sperm-egg fusion protein 3 (240 aa).

Positions 1-22 (MGDLWLLLLLPLSLAAFHGVKG) are cleaved as a signal peptide. Topologically, residues 23–176 (CLECDPKFIE…DDPKKAESRE (154 aa)) are extracellular. A helical membrane pass occupies residues 177–197 (IGLFLILLAEGVILGGVLLLF). The Cytoplasmic portion of the chain corresponds to 198 to 240 (HFCISHQRKMKAIRRSLKTYLEKKLEELMGIKDEKEKDFRGRE).

This sequence belongs to the Izumo family. In terms of assembly, monomer and homodimer.

It localises to the cell membrane. This Bos taurus (Bovine) protein is Izumo sperm-egg fusion protein 3 (IZUMO3).